We begin with the raw amino-acid sequence, 129 residues long: Ribosome-binding factor A (129 aa).

This sequence belongs to the RbfA family. Monomer. Binds 30S ribosomal subunits, but not 50S ribosomal subunits or 70S ribosomes.

It is found in the cytoplasm. Functionally, one of several proteins that assist in the late maturation steps of the functional core of the 30S ribosomal subunit. Associates with free 30S ribosomal subunits (but not with 30S subunits that are part of 70S ribosomes or polysomes). Required for efficient processing of 16S rRNA. May interact with the 5'-terminal helix region of 16S rRNA. This Marinomonas sp. (strain MWYL1) protein is Ribosome-binding factor A.